Reading from the N-terminus, the 208-residue chain is Peroxiredoxin (208 aa).

The region spanning 2-156 (PLLGDDFPQL…IVRAVKALQT (155 aa)) is the Thioredoxin domain. The Cysteine sulfenic acid (-SOH) intermediate role is filled by Cys-44. Arg-119 is a binding site for substrate.

It belongs to the peroxiredoxin family. Prx6 subfamily. In terms of assembly, homodecamer. Pentamer of dimers that assemble into a ring structure.

The protein localises to the cytoplasm. The catalysed reaction is a hydroperoxide + [thioredoxin]-dithiol = an alcohol + [thioredoxin]-disulfide + H2O. In terms of biological role, thiol-specific peroxidase that catalyzes the reduction of hydrogen peroxide and organic hydroperoxides to water and alcohols, respectively. Plays a role in cell protection against oxidative stress by detoxifying peroxides. This Treponema denticola (strain ATCC 35405 / DSM 14222 / CIP 103919 / JCM 8153 / KCTC 15104) protein is Peroxiredoxin.